Reading from the N-terminus, the 125-residue chain is Protein ApaG (125 aa).

Residues 1–125 (MNDTPRVCVQ…FRLAIATHIH (125 aa)) enclose the ApaG domain.

The polypeptide is Protein ApaG (Erwinia tasmaniensis (strain DSM 17950 / CFBP 7177 / CIP 109463 / NCPPB 4357 / Et1/99)).